Consider the following 201-residue polypeptide: FMN reductase (NADH) RutF (201 aa).

The disordered stretch occupies residues 169 to 201 (APRSGAAPAEPARAARALGARPAEGPALALRSA).

This sequence belongs to the non-flavoprotein flavin reductase family. RutF subfamily.

The enzyme catalyses FMNH2 + NAD(+) = FMN + NADH + 2 H(+). Functionally, catalyzes the reduction of FMN to FMNH2 which is used to reduce pyrimidine by RutA via the Rut pathway. This chain is FMN reductase (NADH) RutF, found in Methylorubrum extorquens (strain ATCC 14718 / DSM 1338 / JCM 2805 / NCIMB 9133 / AM1) (Methylobacterium extorquens).